The chain runs to 223 residues: Proteasome subunit beta type-1 (223 aa).

It belongs to the peptidase T1B family. Component of the 20S core complex of the 26S proteasome. The 26S proteasome is composed of a core protease (CP), known as the 20S proteasome, capped at one or both ends by the 19S regulatory particle (RP/PA700). The 20S proteasome core is composed of 28 subunits that are arranged in four stacked rings, resulting in a barrel-shaped structure. The two end rings are each formed by seven alpha subunits, and the two central rings are each formed by seven beta subunits. The catalytic chamber with the active sites is on the inside of the barrel. Present in all tissues examined. Slightly lower levels in roots.

It is found in the cytoplasm. Its subcellular location is the nucleus. Non-catalytic component of the proteasome, a multicatalytic proteinase complex which is characterized by its ability to cleave peptides with Arg, Phe, Tyr, Leu, and Glu adjacent to the leaving group at neutral or slightly basic pH. The proteasome has an ATP-dependent proteolytic activity. The polypeptide is Proteasome subunit beta type-1 (PBF1) (Arabidopsis thaliana (Mouse-ear cress)).